The sequence spans 598 residues: Probable ATP-dependent RNA helicase DDX52 (598 aa).

Lys-15 is subject to N6-acetyllysine. Ser-39 is modified (phosphoserine). The disordered stretch occupies residues 59 to 98 (CGGLQTQQELQNEETTEGGLLERSKEPKKKKRKKMTADVP). The short motif at 166-194 (QLDQEYKISPRLLQNILDAGFQVPTPIQM) is the Q motif element. The region spanning 197–375 (IPVMLHGREL…KLNLDNIVSV (179 aa)) is the Helicase ATP-binding domain. 210–217 (APTGSGKT) is an ATP binding site. Residues 319–322 (DESD) carry the DEAD box motif. A Helicase C-terminal domain is found at 386 to 547 (TVEQELLFVG…PVPEYIKGFQ (162 aa)). The interval 578-598 (AKQKKVAGQNSKKKETLKGKS) is disordered. Over residues 589–598 (KKKETLKGKS) the composition is skewed to basic and acidic residues.

Belongs to the DEAD box helicase family. DDX52/ROK1 subfamily.

The protein localises to the nucleus. Its subcellular location is the nucleolus. It carries out the reaction ATP + H2O = ADP + phosphate + H(+). Required for efficient ribosome biogenesis. May control cell cycle progression by regulating translation of mRNAs that contain a terminal oligo pyrimidine (TOP) motif in their 5' UTRs, such as GTPBP4. The chain is Probable ATP-dependent RNA helicase DDX52 (Ddx52) from Rattus norvegicus (Rat).